The chain runs to 183 residues: UPF0398 protein MCCL_1095 (183 aa).

Belongs to the UPF0398 family.

The sequence is that of UPF0398 protein MCCL_1095 from Macrococcus caseolyticus (strain JCSC5402) (Macrococcoides caseolyticum).